A 70-amino-acid polypeptide reads, in one-letter code: Large ribosomal subunit protein uL30 (70 aa).

Belongs to the universal ribosomal protein uL30 family. Part of the 50S ribosomal subunit.

The protein is Large ribosomal subunit protein uL30 of Renibacterium salmoninarum (strain ATCC 33209 / DSM 20767 / JCM 11484 / NBRC 15589 / NCIMB 2235).